We begin with the raw amino-acid sequence, 548 residues long: Alpha-1,3-mannosyl-glycoprotein 4-beta-N-acetylglucosaminyltransferase B (548 aa).

At 1-7 the chain is on the cytoplasmic side; it reads MRLRNGT. The chain crosses the membrane as a helical; Signal-anchor for type II membrane protein span at residues 8–28; that stretch reads FLTLLLFCLCAFLSLSWYAAL. Over 29-548 the chain is Lumenal; that stretch reads SGQKGDVVDV…LSEIFLKKAD (520 aa). Residues 36-83 are a coiled coil; it reads VDVYQREFLALRDRLHAAEQESLKRSKELNLVLDEIKRAVSERQALRD. N-linked (GlcNAc...) asparagine glycans are attached at residues Asn-87 and Asn-103.

Belongs to the glycosyltransferase 54 family. In terms of assembly, interacts with SLC35A3. The cofactor is a divalent metal cation. Post-translationally, N-glycosylated. As to expression, widely expressed. Strongly overexpressed in pancreatic cancer.

The protein resides in the golgi apparatus membrane. It carries out the reaction an N(4)-{beta-D-GlcNAc-(1-&gt;2)-alpha-D-Man-(1-&gt;3)-[alpha-D-Man-(1-&gt;6)]-beta-D-Man-(1-&gt;4)-beta-D-GlcNAc-(1-&gt;4)-beta-D-GlcNAc}-L-asparaginyl-[protein] + UDP-N-acetyl-alpha-D-glucosamine = an N(4)-{beta-D-GlcNAc-(1-&gt;2)-[beta-D-GlcNAc-(1-&gt;4)]-alpha-D-Man-(1-&gt;3)-[alpha-D-Man-(1-&gt;6)]-beta-D-Man-(1-&gt;4)-beta-D-GlcNAc-(1-&gt;4)-beta-D-GlcNAc}-L-asparaginyl-[protein] + UDP + H(+). The catalysed reaction is N(4)-{beta-D-GlcNAc-(1-&gt;2)-alpha-D-Man-(1-&gt;3)-[beta-D-GlcNAc-(1-&gt;2)-alpha-D-Man-(1-&gt;6)]-beta-D-Man-(1-&gt;4)-beta-D-GlcNAc-(1-&gt;4)-beta-D-GlcNAc}-L-asparaginyl-[protein] + UDP-N-acetyl-alpha-D-glucosamine = N(4)-{beta-D-GlcNAc-(1-&gt;2)-[beta-D-GlcNAc-(1-&gt;4)]-alpha-D-Man-(1-&gt;3)-[beta-D-GlcNAc-(1-&gt;2)-alpha-D-Man-(1-&gt;6)]-beta-D-Man-(1-&gt;4)-beta-D-GlcNAc-(1-&gt;4)-beta-D-GlcNAc}-L-asparaginyl-[protein] + UDP + H(+). The enzyme catalyses an N(4)-{beta-D-GlcNAc-(1-&gt;2)-alpha-D-Man-(1-&gt;3)-[beta-D-GlcNAc-(1-&gt;2)-[beta-D-GlcNAc-(1-&gt;6)]-alpha-D-Man-(1-&gt;6)]-beta-D-Man-(1-&gt;4)-beta-D-GlcNAc-(1-&gt;4)-beta-D-GlcNAc}-L-asparaginyl-[protein] + UDP-N-acetyl-alpha-D-glucosamine = an N(4)-{beta-D-GlcNAc-(1-&gt;2)-[beta-D-GlcNAc-(1-&gt;4)]-alpha-D-Man-(1-&gt;3)-[beta-D-GlcNAc-(1-&gt;2)-[beta-D-GlcNAc-(1-&gt;6)]-alpha-D-Man-(1-&gt;6)]-beta-D-Man-(1-&gt;4)-beta-D-GlcNAc-(1-&gt;4)-beta-D-GlcNAc}-L-asparaginyl-[protein] + UDP + H(+). It catalyses the reaction an N(4)-{beta-D-GlcNAc-(1-&gt;2)-alpha-D-Man-(1-&gt;3)-[beta-D-GlcNAc-(1-&gt;2)-alpha-D-Man-(1-&gt;6)]-beta-D-Man-(1-&gt;4)-beta-D-GlcNAc-(1-&gt;4)-[alpha-L-Fuc-(1-&gt;6)]-beta-D-GlcNAc}-L-asparaginyl-[protein] + UDP-N-acetyl-alpha-D-glucosamine = N(4)-{beta-D-GlcNAc-(1-&gt;2)-[beta-D-GlcNAc-(1-&gt;4)]-alpha-D-Man-(1-&gt;3)-[beta-D-GlcNAc-(1-&gt;2)-alpha-D-Man-(1-&gt;6)]-beta-D-Man-(1-&gt;4)-beta-D-GlcNAc-(1-&gt;4)-[alpha-L-Fuc-(1-&gt;6)]-beta-D-GlcNAc}-asparaginyl-[protein] + UDP + H(+). It carries out the reaction an N(4)-{beta-D-GlcNAc-(1-&gt;2)-alpha-D-Man-(1-&gt;3)-[beta-D-Gal-(1-&gt;4)-beta-D-GlcNAc-(1-&gt;2)-alpha-D-Man-(1-&gt;6)]-beta-D-Man-(1-&gt;4)-beta-D-GlcNAc-(1-&gt;4)-beta-D-GlcNAc}-L-asparaginyl-[protein] + UDP-N-acetyl-alpha-D-glucosamine = an N(4)-{beta-D-GlcNAc-(1-&gt;2)-[beta-D-GlcNAc-(1-&gt;4)]-alpha-D-Man-(1-&gt;3)-[beta-D-Gal-(1-&gt;4)-beta-D-GlcNAc-(1-&gt;2)-alpha-D-Man-(1-&gt;6)]-beta-D-Man-(1-&gt;4)-beta-D-GlcNAc-(1-&gt;4)-beta-D-GlcNAc}-L-asparaginyl-[protein] + UDP + H(+). The catalysed reaction is N(4)-{beta-D-GlcNAc-(1-&gt;2)-alpha-D-Man-(1-&gt;3)-[alpha-D-Man-(1-&gt;3)-{alpha-D-Man-(1-&gt;6)}-alpha-D-Man-(1-&gt;6)]-beta-D-Man-(1-&gt;4)-beta-D-GlcNAc-(1-&gt;4)-beta-D-GlcNAc}-asparaginyl-[protein] + UDP-N-acetyl-alpha-D-glucosamine = N(4)-{beta-D-GlcNAc-(1-&gt;2)-[beta-D-GlcNAc-(1-&gt;4)]-alpha-D-Man-(1-&gt;3)-[alpha-D-Man-(1-&gt;3)-{alpha-D-Man-(1-&gt;6)}-alpha-D-Man-(1-&gt;6)]-beta-D-Man-(1-&gt;4)-beta-D-GlcNAc-(1-&gt;4)-beta-D-GlcNAc}-asparaginyl-[protein] + UDP + H(+). The enzyme catalyses N(4)-{beta-D-GlcNAc-(1-&gt;2)-alpha-D-Man-(1-&gt;3)-beta-D-Man-(1-&gt;4)-beta-D-GlcNAc-(1-&gt;4)-beta-D-GlcNAc}-asparaginyl-[protein] + UDP-N-acetyl-alpha-D-glucosamine = N(4)-{beta-D-GlcNAc-(1-&gt;2)-[beta-D-GlcNAc-(1-&gt;4)]-alpha-D-Man-(1-&gt;3)-beta-D-Man-(1-&gt;4)-beta-D-GlcNAc-(1-&gt;4)-beta-D-GlcNAc}-asparaginyl-[protein] + UDP + H(+). The protein operates within protein modification; protein glycosylation. Its function is as follows. Glycosyltransferase that catalyzes the transfer of GlcNAc from UDP-GlcNAc to the GlcNAcbeta1-2Manalpha1-3 arm of the core structure of N-linked glycans through a beta1-4 linkage and participates in the production of tri- and tetra-antennary N-linked sugar chains. Prefers complex-type N-glycans over hybrid-types. Has lower affinities for donors or acceptors than MGAT4A, suggesting that, under physiological conditions, it is not the main contributor in N-glycan biosynthesis. In Homo sapiens (Human), this protein is Alpha-1,3-mannosyl-glycoprotein 4-beta-N-acetylglucosaminyltransferase B.